Here is a 205-residue protein sequence, read N- to C-terminus: SREBP regulating gene protein (205 aa).

Over 1-16 (MVNLAAMVWRRLLRKR) the chain is Cytoplasmic. Residues 17-35 (WVLALVFGLSLVYFLSSTF) form a helical membrane-spanning segment. Residues 36–205 (KQEERAVRDR…GESPPELFPA (170 aa)) lie on the Lumenal side of the membrane. N-linked (GlcNAc...) asparagine glycosylation occurs at Asn67.

Belongs to the SPRING family. As to quaternary structure, interacts with SCAP.

The protein localises to the golgi apparatus membrane. Functionally, positively regulates hepatic SREBP signaling pathway by modulating the proper localization of SCAP (SREBP cleavage-activating protein) to the endoplasmic reticulum, thereby controlling the level of functional SCAP. In Homo sapiens (Human), this protein is SREBP regulating gene protein.